We begin with the raw amino-acid sequence, 412 residues long: Peptidase T (412 aa).

Position 81 (histidine 81) interacts with Zn(2+). Aspartate 83 is an active-site residue. Aspartate 144 lines the Zn(2+) pocket. Glutamate 178 serves as the catalytic Proton acceptor. The Zn(2+) site is built by glutamate 179, aspartate 201, and histidine 383.

Belongs to the peptidase M20B family. Zn(2+) serves as cofactor.

Its subcellular location is the cytoplasm. The enzyme catalyses Release of the N-terminal residue from a tripeptide.. Functionally, cleaves the N-terminal amino acid of tripeptides. The sequence is that of Peptidase T from Bacillus cereus (strain ATCC 14579 / DSM 31 / CCUG 7414 / JCM 2152 / NBRC 15305 / NCIMB 9373 / NCTC 2599 / NRRL B-3711).